Here is a 226-residue protein sequence, read N- to C-terminus: EEF1A lysine methyltransferase 3 (226 aa).

S-adenosyl-L-methionine contacts are provided by residues W57, 83 to 85, D104, W133, and A150; that span reads GAG.

This sequence belongs to the methyltransferase superfamily. METTL21 family. As to quaternary structure, interacts with members of the heat shock protein 70 and 90 families and of the TCP-1 chaperonin family, as well as with HSPD1, STIP1 and tubulin; at least some of these proteins may be methylation substrates.

It is found in the cytoplasm. It localises to the cytoskeleton. The protein localises to the microtubule organizing center. The protein resides in the centrosome. The catalysed reaction is L-lysyl-[protein] + 3 S-adenosyl-L-methionine = N(6),N(6),N(6)-trimethyl-L-lysyl-[protein] + 3 S-adenosyl-L-homocysteine + 3 H(+). The enzyme catalyses L-lysyl-[protein] + S-adenosyl-L-methionine = N(6)-methyl-L-lysyl-[protein] + S-adenosyl-L-homocysteine + H(+). It catalyses the reaction N(6)-methyl-L-lysyl-[protein] + S-adenosyl-L-methionine = N(6),N(6)-dimethyl-L-lysyl-[protein] + S-adenosyl-L-homocysteine + H(+). It carries out the reaction N(6),N(6)-dimethyl-L-lysyl-[protein] + S-adenosyl-L-methionine = N(6),N(6),N(6)-trimethyl-L-lysyl-[protein] + S-adenosyl-L-homocysteine + H(+). Its function is as follows. Protein-lysine methyltransferase that selectively mono-, di- and trimethylates 'Lys-165' of the translation elongation factors EEF1A1 and EEF1A2 in an aminoacyl-tRNA and GTP-dependent manner. EEF1A1 methylation by EEF1AKMT3 is dynamic as well as inducible by stress conditions, such as ER-stress, and plays a regulatory role on mRNA translation. The sequence is that of EEF1A lysine methyltransferase 3 from Homo sapiens (Human).